The following is a 490-amino-acid chain: Hydroxysteroid dehydrogenase-like protein 2 (490 aa).

NADP(+) contacts are provided by residues 17-23, Lys-42, and Asp-74; that span reads GASRGIG. At Lys-42 the chain carries N6-(2-hydroxyisobutyryl)lysine. N6-acetyllysine is present on Lys-116. Tyr-168 functions as the Proton acceptor in the catalytic mechanism. An NADP(+)-binding site is contributed by Lys-172. Over residues 282–301 the composition is skewed to basic and acidic residues; that stretch reads MEEKESNDSVPEVKEEKLQL. The segment at 282 to 370 is disordered; it reads MEEKESNDSV…PRQQPQPFVQ (89 aa). Low complexity predominate over residues 302-367; sequence QEESQLQKQP…QPRPRQQPQP (66 aa). Positions 380–487 constitute an SCP2 domain; sequence GAVEETFRIV…KLEKLMTQMN (108 aa). The residue at position 390 (Lys-390) is an N6-succinyllysine.

This sequence belongs to the short-chain dehydrogenases/reductases (SDR) family. In terms of tissue distribution, widely expressed.

It localises to the peroxisome. The protein localises to the mitochondrion. In terms of biological role, has apparently no steroid dehydrogenase activity. Controls bile acid (BA) and lipid metabolism in response to nutritional cues. This Mus musculus (Mouse) protein is Hydroxysteroid dehydrogenase-like protein 2 (Hsdl2).